The chain runs to 121 residues: Putative iron-sulfur cluster insertion protein ErpA (121 aa).

Cys49, Cys113, and Cys115 together coordinate iron-sulfur cluster.

This sequence belongs to the HesB/IscA family. As to quaternary structure, homodimer. Iron-sulfur cluster serves as cofactor.

In terms of biological role, required for insertion of 4Fe-4S clusters. This is Putative iron-sulfur cluster insertion protein ErpA from Paraburkholderia phymatum (strain DSM 17167 / CIP 108236 / LMG 21445 / STM815) (Burkholderia phymatum).